We begin with the raw amino-acid sequence, 82 residues long: Small ribosomal subunit protein eS21y (82 aa).

Position 1 is an N-acetylmethionine (Met1).

This sequence belongs to the eukaryotic ribosomal protein eS21 family.

This is Small ribosomal subunit protein eS21y (RPS21C) from Arabidopsis thaliana (Mouse-ear cress).